We begin with the raw amino-acid sequence, 441 residues long: Ribosomal protein uS12 methylthiotransferase RimO (441 aa).

Residues 7–117 enclose the MTTase N-terminal domain; sequence PKISFVSLGC…VLEAVHRALP (111 aa). 6 residues coordinate [4Fe-4S] cluster: Cys16, Cys52, Cys81, Cys148, Cys152, and Cys155. Residues 134-371 form the Radical SAM core domain; sequence LTPRHYAYLK…MARQQKISAR (238 aa). Residues 374-440 enclose the TRAM domain; sequence KRKVGTRQQV…AYDLHGTVAG (67 aa).

The protein belongs to the methylthiotransferase family. RimO subfamily. The cofactor is [4Fe-4S] cluster.

Its subcellular location is the cytoplasm. It carries out the reaction L-aspartate(89)-[ribosomal protein uS12]-hydrogen + (sulfur carrier)-SH + AH2 + 2 S-adenosyl-L-methionine = 3-methylsulfanyl-L-aspartate(89)-[ribosomal protein uS12]-hydrogen + (sulfur carrier)-H + 5'-deoxyadenosine + L-methionine + A + S-adenosyl-L-homocysteine + 2 H(+). Catalyzes the methylthiolation of an aspartic acid residue of ribosomal protein uS12. This is Ribosomal protein uS12 methylthiotransferase RimO from Rhodopseudomonas palustris (strain BisA53).